Consider the following 199-residue polypeptide: MAP6 domain-containing protein 1 (199 aa).

S-palmitoyl cysteine attachment occurs at residues C5, C10, and C11. The disordered stretch occupies residues Y33–P110. S38 is subject to Phosphoserine. Mn regions lie at residues T130–V143 and D165–V177. Residue S167 is modified to Phosphoserine.

The protein belongs to the STOP family. In terms of assembly, interacts with calmodulin. Post-translationally, palmitoylated. Palmitoylation enhances association with microtubules.

The protein localises to the golgi apparatus. Its subcellular location is the cytoplasm. It localises to the cytoskeleton. Its function is as follows. May have microtubule-stabilizing activity. This is MAP6 domain-containing protein 1 (MAP6D1) from Homo sapiens (Human).